The sequence spans 484 residues: Ribosomal protein uS12 methylthiotransferase RimO (484 aa).

The region spanning 8–119 (RRVAMVTLGC…LAERLDDVLA (112 aa)) is the MTTase N-terminal domain. [4Fe-4S] cluster-binding residues include cysteine 17, cysteine 53, cysteine 82, cysteine 184, cysteine 188, and cysteine 191. The Radical SAM core domain maps to 170–401 (LDDSPLAALK…ALADELVAQR (232 aa)). The TRAM domain occupies 403-469 (EDRVGTEVRV…GVDLVVRPVG (67 aa)).

It belongs to the methylthiotransferase family. RimO subfamily. [4Fe-4S] cluster is required as a cofactor.

It is found in the cytoplasm. The enzyme catalyses L-aspartate(89)-[ribosomal protein uS12]-hydrogen + (sulfur carrier)-SH + AH2 + 2 S-adenosyl-L-methionine = 3-methylsulfanyl-L-aspartate(89)-[ribosomal protein uS12]-hydrogen + (sulfur carrier)-H + 5'-deoxyadenosine + L-methionine + A + S-adenosyl-L-homocysteine + 2 H(+). Functionally, catalyzes the methylthiolation of an aspartic acid residue of ribosomal protein uS12. In Saccharopolyspora erythraea (strain ATCC 11635 / DSM 40517 / JCM 4748 / NBRC 13426 / NCIMB 8594 / NRRL 2338), this protein is Ribosomal protein uS12 methylthiotransferase RimO.